The following is a 192-amino-acid chain: MSKSSDRINLTNQFLIAMPNMADPTFSGTVVYLCDHSERGALGLVINRPTDIDLESLFNRIDLKLEIEPLLHIPVYFGGPVQTERGFVLHEPVEGSAYNSSMTVEGGLEMTTSKDVLEAVATGTGPKRFLLTLGHAGWGAGQLEEEISKNGWLTVAADPRIVFDTPAEERFEAALGLLGVSSSMLSGEAGHA.

This sequence belongs to the UPF0301 (AlgH) family.

The chain is UPF0301 protein BMA10247_1859 from Burkholderia mallei (strain NCTC 10247).